The primary structure comprises 516 residues: TBC1 domain family member 22A (516 aa).

An N-acetylalanine modification is found at A2. Disordered regions lie at residues 63-88 and 102-186; these read EFESNTSDAWDAGEDDDELLAMATES and LRNH…ALAD. Residues 107–116 show a composition bias toward polar residues; the sequence is QRQSQPSQKT. The segment covering 122-133 has biased composition (pro residues); the sequence is EPQPIAEPPVPP. A compositionally biased stretch (polar residues) spans 143–179; that stretch reads VSESHTPCPSESTGDTVPLQRSQSLPHSATVTLSGTS. 2 positions are modified to phosphoserine: S144 and S166. Residues 221 to 445 enclose the Rab-GAP TBC domain; that stretch reads GIPKPVRPMT…RLWDTYQSEP (225 aa).

In terms of assembly, homodimer. Interacts with ACBD3 and ARFGEF1. Interacts with YWHAB, YWHAE, YWHAG, YWHAH, YWHAQ and YWHAZ.

Its function is as follows. May act as a GTPase-activating protein for Rab family protein(s). The protein is TBC1 domain family member 22A (Tbc1d22a) of Mus musculus (Mouse).